The chain runs to 229 residues: MPKRKALTPFPYLASIVFLPWGISLSFNKSLESWVINWWNTRQSETFLNDIQEKKVLERFIELEELFLLDEMIKEYSGTHIQKLRIGIYKETIQLVRMHNQDHIHLILHFSTNIICFTILSAYSILGNEELVILNSWVQEFLYNLSDTIKAFSILLLTDLCIGFHSPHGWELMIGLVYQNFGFAHNEQVISGLVSTFPVIIDTILKYWIFLFLNRVSPSLVVIYHSMNE.

The next 3 helical transmembrane spans lie at 7–27 (LTPFPYLASIVFLPWGISLSF), 106–126 (LILHFSTNIICFTILSAYSIL), and 193–213 (LVSTFPVIIDTILKYWIFLFL).

It belongs to the CemA family.

The protein resides in the plastid. It localises to the chloroplast inner membrane. It catalyses the reaction K(+)(in) + H(+)(out) = K(+)(out) + H(+)(in). In terms of biological role, contributes to K(+)/H(+) antiport activity by supporting proton efflux to control proton extrusion and homeostasis in chloroplasts in a light-dependent manner to modulate photosynthesis. Prevents excessive induction of non-photochemical quenching (NPQ) under continuous-light conditions. Indirectly promotes efficient inorganic carbon uptake into chloroplasts. The chain is Potassium/proton antiporter CemA from Illicium oligandrum (Star anise).